The sequence spans 106 residues: Iron-sulfur cluster assembly protein CyaY (106 aa).

Belongs to the frataxin family.

In terms of biological role, involved in iron-sulfur (Fe-S) cluster assembly. May act as a regulator of Fe-S biogenesis. The protein is Iron-sulfur cluster assembly protein CyaY of Citrobacter koseri (strain ATCC BAA-895 / CDC 4225-83 / SGSC4696).